The chain runs to 213 residues: Orotate phosphoribosyltransferase (213 aa).

Position 26 (Lys-26) interacts with 5-phospho-alpha-D-ribose 1-diphosphate. Position 34-35 (34-35 (FF)) interacts with orotate. 5-phospho-alpha-D-ribose 1-diphosphate is bound by residues 72-73 (YK), Arg-99, Lys-100, Lys-103, His-105, and 124-132 (DDVITAGTA). Thr-128 and Arg-156 together coordinate orotate.

The protein belongs to the purine/pyrimidine phosphoribosyltransferase family. PyrE subfamily. As to quaternary structure, homodimer. The cofactor is Mg(2+).

The enzyme catalyses orotidine 5'-phosphate + diphosphate = orotate + 5-phospho-alpha-D-ribose 1-diphosphate. It participates in pyrimidine metabolism; UMP biosynthesis via de novo pathway; UMP from orotate: step 1/2. Catalyzes the transfer of a ribosyl phosphate group from 5-phosphoribose 1-diphosphate to orotate, leading to the formation of orotidine monophosphate (OMP). In Saccharophagus degradans (strain 2-40 / ATCC 43961 / DSM 17024), this protein is Orotate phosphoribosyltransferase.